Consider the following 604-residue polypeptide: MRVSGQSIIAISLFTLSLYIHRVQARPFVLVLSNEDLNGGFNDNGAYESSDFDEFGESEPKSEEELDPGSWRRIFETNESTVHASASPQYYSGLHKILSAASEGNTTLMEEAVSEIDSSASSGDPHAQSVMGFVYGIGMMRETSRSKSILHHHFAAAGGNMQSKMALAFRYLRQNMYDKAVELYAELAETAVNSFLISKDSPMAEPVRIHIGTEENKDALRKSRGEEDEDFQILEYQAEKGNSVAMHKIGLFYYFGLRGLRRDHAKALYWFSKAEFNGLGYLYVKGYGVDKRNYTKAREYFEMAANNEDPSGHYNLGVLYLKGTGVKKDVRHATKYFFVAANAGQPKAFYQLAKMFHTGVGLTKNLEMATTFYKLVAERGPWSSLSRWALEAYLKGDVGKAFILYSRMSELGYEVAQSNAAWIVDKYGERSMCMGVYGFCTDKERHDRAHSLWWRASEQGNEHAALLIGDAYYYGRGTERDFVRAAEAYMYAKSQSNAQAMFNLGYMHEHGEGLPFDLHLAKRYYDQALQSDTAAKLPVTLALASVWVRRNYADTALVQVLNSLPEVHQKVVEWVENGMLEEVVLDPVGANVAQPLAAPVAFPQ.

Residues 1-25 (MRVSGQSIIAISLFTLSLYIHRVQA) form the signal peptide. Residues 48-69 (ESSDFDEFGESEPKSEEELDPG) form a disordered region. 2 N-linked (GlcNAc...) asparagine glycosylation sites follow: Asn78 and Asn105. 7 Sel1-like repeats span residues 125–160 (PHAQSVMGFVYGIGMMRETSRSKSILHHHFAAAGGN), 244–274 (VAMHKIGLFYYFGLRGLRRDHAKALYWFSKA), 279–307 (LGYLYVKGYGVDKRNYTKAREYFEMAANN), 311–344 (SGHYNLGVLYLKGTGVKKDVRHATKYFFVAANAG), 346–380 (PKAFYQLAKMFHTGVGLTKNLEMATTFYKLVAERG), 464–492 (AALLIGDAYYYGRGTERDFVRAAEAYMYA), and 498–528 (AQAMFNLGYMHEHGEGLPFDLHLAKRYYDQA). N-linked (GlcNAc...) asparagine glycosylation occurs at Asn293.

Belongs to the sel-1 family.

Functionally, may be involved in the endoplasmic reticulum (ER) quality control system called ER-associated degradation (ERAD). The protein is ERAD-associated E3 ubiquitin-protein ligase component HRD3B of Arabidopsis thaliana (Mouse-ear cress).